The sequence spans 301 residues: Mycothiol acetyltransferase (301 aa).

N-acetyltransferase domains are found at residues 6-151 and 153-301; these read EWRQ…ILRD and VSLR…QYGR. 79 to 81 contributes to the acetyl-CoA binding site; the sequence is LFV. Glutamate 180, lysine 219, and glutamate 235 together coordinate 1D-myo-inositol 2-(L-cysteinylamino)-2-deoxy-alpha-D-glucopyranoside. Acetyl-CoA is bound by residues 239 to 241 and 246 to 252; these read VGV and QGGGLGR. Tyrosine 273 is a 1D-myo-inositol 2-(L-cysteinylamino)-2-deoxy-alpha-D-glucopyranoside binding site.

Belongs to the acetyltransferase family. MshD subfamily. Monomer.

The catalysed reaction is 1D-myo-inositol 2-(L-cysteinylamino)-2-deoxy-alpha-D-glucopyranoside + acetyl-CoA = mycothiol + CoA + H(+). Catalyzes the transfer of acetyl from acetyl-CoA to desacetylmycothiol (Cys-GlcN-Ins) to form mycothiol. This is Mycothiol acetyltransferase from Amycolatopsis mediterranei (strain U-32).